A 1164-amino-acid chain; its full sequence is Auxin response factor 7 (1164 aa).

The TF-B3 DNA-binding region spans 127 to 229 (FCKTLTASDT…QLLLGIRRAN (103 aa)). Disordered regions lie at residues 451-505 (HNNL…QQQL), 536-555 (QQLQ…QQQQ), 570-728 (HQQP…LLQQ), 765-858 (FLSP…SSSG), and 903-930 (KSKA…GENN). Residues 464–489 (LSFQTPHGGISSSNLQFNKQNQQAPM) show a composition bias toward polar residues. Low complexity predominate over residues 570–635 (HQQPLQQQTQ…SQQASTHHLQ (66 aa)). Over residues 637-651 (QLVSGSMASSVITPP) the composition is skewed to polar residues. The segment covering 652–671 (SSSLNQSFQQQQQQSKQLQQ) has biased composition (low complexity). A compositionally biased stretch (polar residues) spans 678-710 (ASTSQSSVIETSKSSSNLMSAPPQETQFSRQVE). Composition is skewed to low complexity over residues 711 to 728 (QQQP…LLQQ) and 765 to 790 (FLSP…TLSQ). Polar residues predominate over residues 791–808 (GHQFPSSCTNNGLSTLQP). Residues 841 to 851 (PSSSTSPSTNN) are compositionally biased toward low complexity. Residues 903–921 (KSKASLTDHQLEASASGTS) are compositionally biased toward polar residues. The 94-residue stretch at 1037 to 1130 (RTYTKVQKRG…EVQQMSLDGN (94 aa)) folds into the PB1 domain. The segment at 1145 to 1164 (DSGNAWRGHYDDNSATSFNR) is disordered.

The protein belongs to the ARF family. Homodimers and heterodimers. Interacts with the auxin-responsive proteins IAA1 and IAA12 (BODENLOS). Interacts (via PB1 domain) with IAA17 (via PB1 domain). Interacts with IAA19. Interacts with ARF5. Binds to JMJ30. Binds to ATXR2 in the nucleus. As to expression, expressed in the whole plant.

The protein localises to the nucleus. Auxin response factors (ARFs) are transcriptional factors that bind specifically to the DNA sequence 5'-TGTCTC-3' found in the auxin-responsive promoter elements (AuxREs). Acts as a transcriptional activator of several tropic stimulus-induced (TSI) genes, including SAUR50. Formation of heterodimers with Aux/IAA proteins may alter their ability to modulate early auxin response genes expression. Required for differential growth responses of aerial tissues. Involved in ethylene responses. Regulates lateral root formation through direct regulation of LBD16 and/or LBD29. Functionally redundant with ARF19. Mediates embryo axis formation and vascular tissues differentiation. Functionally redundant with ARF5. Involved in cellular dedifferentiation during callus formation on callus-inducing medium (CIM) and in an ATXR2-dependent manner. This chain is Auxin response factor 7, found in Arabidopsis thaliana (Mouse-ear cress).